A 222-amino-acid polypeptide reads, in one-letter code: Glutathione S-transferase A1 (222 aa).

Met1 bears the N-acetylmethionine mark. Ala2 bears the N-acetylalanine; in Glutathione S-transferase A1, N-terminally processed mark. Positions 3-83 (GKPTLHYFNG…YIATKYNLYG (81 aa)) constitute a GST N-terminal domain. Lys4 carries the post-translational modification N6-succinyllysine. Residues Tyr9, Lys45, 54 to 55 (QV), and 67 to 68 (QT) each bind glutathione. Residues 85-208 (DMKERALIDM…QPGSQRKPPT (124 aa)) enclose the GST C-terminal domain.

It belongs to the GST superfamily. Alpha family. Homodimer or heterodimer of GSTA1 and GSTA2. In terms of tissue distribution, expressed in corpus luteum, adrenal gland, testis, liver, lung, thyroid and kidney.

The protein localises to the cytoplasm. It carries out the reaction RX + glutathione = an S-substituted glutathione + a halide anion + H(+). It catalyses the reaction prostaglandin A2 + glutathione = prostaglandin A2-S-(R)-glutathione. The enzyme catalyses prostaglandin J2 + glutathione = prostaglandin J2-S-(R)-glutathione. The catalysed reaction is (13S)-hydroperoxy-(9Z,11E)-octadecadienoate + 2 glutathione = (13S)-hydroxy-(9Z,11E)-octadecadienoate + glutathione disulfide + H2O. It carries out the reaction androst-5-ene-3,17-dione = androst-4-ene-3,17-dione. In terms of biological role, glutathione S-transferase that catalyzes the nucleophilic attack of the sulfur atom of glutathione on the electrophilic groups of a wide range of exogenous and endogenous compounds. Involved in the formation of glutathione conjugates of both prostaglandin A2 (PGA2) and prostaglandin J2 (PGJ2). It also catalyzes the isomerization of D5-androstene-3,17-dione (AD) into D4-androstene-3,17-dione and may therefore play an important role in hormone biosynthesis. Through its glutathione-dependent peroxidase activity toward the fatty acid hydroperoxide (13S)-hydroperoxy-(9Z,11E)-octadecadienoate/13-HPODE it is also involved in the metabolism of oxidized linoleic acid. This Bos taurus (Bovine) protein is Glutathione S-transferase A1 (GSTA1).